Reading from the N-terminus, the 338-residue chain is Nicotinate-nucleotide--dimethylbenzimidazole phosphoribosyltransferase (338 aa).

E306 functions as the Proton acceptor in the catalytic mechanism.

It belongs to the CobT family.

The enzyme catalyses 5,6-dimethylbenzimidazole + nicotinate beta-D-ribonucleotide = alpha-ribazole 5'-phosphate + nicotinate + H(+). It functions in the pathway nucleoside biosynthesis; alpha-ribazole biosynthesis; alpha-ribazole from 5,6-dimethylbenzimidazole: step 1/2. In terms of biological role, catalyzes the synthesis of alpha-ribazole-5'-phosphate from nicotinate mononucleotide (NAMN) and 5,6-dimethylbenzimidazole (DMB). The protein is Nicotinate-nucleotide--dimethylbenzimidazole phosphoribosyltransferase of Cereibacter sphaeroides (strain ATCC 17023 / DSM 158 / JCM 6121 / CCUG 31486 / LMG 2827 / NBRC 12203 / NCIMB 8253 / ATH 2.4.1.) (Rhodobacter sphaeroides).